Reading from the N-terminus, the 215-residue chain is Methylthioribulose-1-phosphate dehydratase (215 aa).

Zn(2+) contacts are provided by histidine 103 and histidine 105.

Belongs to the aldolase class II family. MtnB subfamily. Zn(2+) serves as cofactor.

The catalysed reaction is 5-(methylsulfanyl)-D-ribulose 1-phosphate = 5-methylsulfanyl-2,3-dioxopentyl phosphate + H2O. It functions in the pathway amino-acid biosynthesis; L-methionine biosynthesis via salvage pathway; L-methionine from S-methyl-5-thio-alpha-D-ribose 1-phosphate: step 2/6. Catalyzes the dehydration of methylthioribulose-1-phosphate (MTRu-1-P) into 2,3-diketo-5-methylthiopentyl-1-phosphate (DK-MTP-1-P). This chain is Methylthioribulose-1-phosphate dehydratase, found in Persephonella marina (strain DSM 14350 / EX-H1).